The sequence spans 445 residues: uncharacterized protein (445 aa).

Helical transmembrane passes span Ile16–Ile36, Leu52–Leu72, Val98–Cys118, Gly168–Val188, Ala219–Ile239, Gly243–Gly263, Leu283–Ser303, and Ala366–Val386. The interval Ala417–Thr445 is disordered.

It belongs to the major facilitator superfamily.

Its subcellular location is the cell membrane. This is an uncharacterized protein from Mycobacterium tuberculosis (strain ATCC 25618 / H37Rv).